Consider the following 243-residue polypeptide: Segregation and condensation protein A (243 aa).

The protein belongs to the ScpA family. In terms of assembly, component of a cohesin-like complex composed of ScpA, ScpB and the Smc homodimer, in which ScpA and ScpB bind to the head domain of Smc. The presence of the three proteins is required for the association of the complex with DNA.

It is found in the cytoplasm. Its function is as follows. Participates in chromosomal partition during cell division. May act via the formation of a condensin-like complex containing Smc and ScpB that pull DNA away from mid-cell into both cell halves. This is Segregation and condensation protein A from Staphylococcus epidermidis (strain ATCC 35984 / DSM 28319 / BCRC 17069 / CCUG 31568 / BM 3577 / RP62A).